The following is a 209-amino-acid chain: Holliday junction branch migration complex subunit RuvA (209 aa).

Residues 1 to 70 (MINYLRGQAI…EEQPLLYGFG (70 aa)) form a domain I region. Residues 71–149 (TAPERELFRQ…AWRQLREATT (79 aa)) form a domain II region. The tract at residues 150–158 (TITAILPAA) is flexible linker. The interval 158-209 (AAILEDVQMTLLALGYSQEEIDRAMAVLSQDALFSKNTQPEDWIKGAINWLG) is domain III.

This sequence belongs to the RuvA family. Homotetramer. Forms an RuvA(8)-RuvB(12)-Holliday junction (HJ) complex. HJ DNA is sandwiched between 2 RuvA tetramers; dsDNA enters through RuvA and exits via RuvB. An RuvB hexamer assembles on each DNA strand where it exits the tetramer. Each RuvB hexamer is contacted by two RuvA subunits (via domain III) on 2 adjacent RuvB subunits; this complex drives branch migration. In the full resolvosome a probable DNA-RuvA(4)-RuvB(12)-RuvC(2) complex forms which resolves the HJ.

The protein localises to the cytoplasm. The RuvA-RuvB-RuvC complex processes Holliday junction (HJ) DNA during genetic recombination and DNA repair, while the RuvA-RuvB complex plays an important role in the rescue of blocked DNA replication forks via replication fork reversal (RFR). RuvA specifically binds to HJ cruciform DNA, conferring on it an open structure. The RuvB hexamer acts as an ATP-dependent pump, pulling dsDNA into and through the RuvAB complex. HJ branch migration allows RuvC to scan DNA until it finds its consensus sequence, where it cleaves and resolves the cruciform DNA. The sequence is that of Holliday junction branch migration complex subunit RuvA from Microcystis aeruginosa (strain NIES-843 / IAM M-2473).